Reading from the N-terminus, the 362-residue chain is Anthranilate phosphoribosyltransferase (362 aa).

Residues G96, 99–100 (GD), T104, 106–109 (NIST), 124–132 (KHGNRAASS), and G136 each bind 5-phospho-alpha-D-ribose 1-diphosphate. Anthranilate is bound at residue G96. Residue S108 coordinates Mg(2+). N127 is an anthranilate binding site. R182 lines the anthranilate pocket. 2 residues coordinate Mg(2+): D240 and E241.

It belongs to the anthranilate phosphoribosyltransferase family. Homodimer. Mg(2+) serves as cofactor.

It carries out the reaction N-(5-phospho-beta-D-ribosyl)anthranilate + diphosphate = 5-phospho-alpha-D-ribose 1-diphosphate + anthranilate. Its pathway is amino-acid biosynthesis; L-tryptophan biosynthesis; L-tryptophan from chorismate: step 2/5. Catalyzes the transfer of the phosphoribosyl group of 5-phosphorylribose-1-pyrophosphate (PRPP) to anthranilate to yield N-(5'-phosphoribosyl)-anthranilate (PRA). The chain is Anthranilate phosphoribosyltransferase from Rhodococcus jostii (strain RHA1).